The following is a 24-amino-acid chain: Coenzyme PQQ synthesis protein A (24 aa).

Positions 16-20 form a cross-link, pyrroloquinoline quinone (Glu-Tyr); the sequence is EITMY.

It belongs to the PqqA family.

The protein operates within cofactor biosynthesis; pyrroloquinoline quinone biosynthesis. Required for coenzyme pyrroloquinoline quinone (PQQ) biosynthesis. PQQ is probably formed by cross-linking a specific glutamate to a specific tyrosine residue and excising these residues from the peptide. The protein is Coenzyme PQQ synthesis protein A of Burkholderia cenocepacia (strain ATCC BAA-245 / DSM 16553 / LMG 16656 / NCTC 13227 / J2315 / CF5610) (Burkholderia cepacia (strain J2315)).